The primary structure comprises 527 residues: Bacillolysin (527 aa).

The N-terminal stretch at Met-1–Ala-28 is a signal peptide. Residues Lys-29–His-223 constitute a propeptide, activation peptide. Asp-276, Asp-278, and Asp-354 together coordinate Ca(2+). His-358 contributes to the Zn(2+) binding site. The active site involves Glu-359. Positions 362 and 382 each coordinate Zn(2+). Ca(2+) contacts are provided by Asp-393, Asn-394, Asp-396, Glu-401, Tyr-404, Thr-405, and Asp-411. The Proton donor role is filled by His-442.

It belongs to the peptidase M4 family. Requires Ca(2+) as cofactor. Zn(2+) serves as cofactor.

It is found in the secreted. It carries out the reaction Similar, but not identical, to that of thermolysin.. Extracellular zinc metalloprotease. This chain is Bacillolysin (npr), found in Brevibacillus brevis (Bacillus brevis).